The following is a 308-amino-acid chain: Ribosomal RNA large subunit methyltransferase F (308 aa).

The protein belongs to the methyltransferase superfamily. METTL16/RlmF family.

It localises to the cytoplasm. The enzyme catalyses adenosine(1618) in 23S rRNA + S-adenosyl-L-methionine = N(6)-methyladenosine(1618) in 23S rRNA + S-adenosyl-L-homocysteine + H(+). In terms of biological role, specifically methylates the adenine in position 1618 of 23S rRNA. The protein is Ribosomal RNA large subunit methyltransferase F of Salmonella heidelberg (strain SL476).